A 544-amino-acid chain; its full sequence is MEDLKPSAANSLPLTLLGFLERAATVYGDCTSIVYGNSTVYTWRETNHRCLCVASALSSIGIGRSDVVSVLSANTPEMYELQFSVPMSGAILNNINTRLDARTVSVLLRHCESKLLFVDFFYSDLAVEAITMLLNPPILVLIANEEEEEGGAEVTERSKFCYLYSDLITRGNPDFKWIRPGSEWDPIVVNYTSGTTSSPKGVVHCHRGIFVMTLDSLTDWAVPKTPVYLWTLPIFHANGWTYPWGIAAVGGTNVCVRKLHAPSIYHLIRDHGVTHMYGAPIVLQILSASQESDQPLKSPVNFLTAGSSPPATVLLRAESLGFIVSHGYGLTETAGVIVSCAWKPNWNRLPASDQAQLKSRQGVRTVGFSEIDVVDPESGRSVERDGETVGEIVLRGSSIMLGYLKNPIGTQNSFKNGWFFTGDLGVIHGDGYLEIKDRSKDVIISGGENVSSVEVEAVLYTNPAVNEAAVVARPDEFWGETPCAFVSLKPGLTRKPTDKEIIEYCKYKMPRYMAPKTVSFLEELPKTSTGKIIKSLLKEIAKNM.

This sequence belongs to the ATP-dependent AMP-binding enzyme family. Expressed at low levels in roots, leaves, stems, flowers and developing seeds.

May act as an acid--thiol ligase that activates carboxylic acids by forming acyl-CoAs. This is Probable acyl-activating enzyme 8 (AAE8) from Arabidopsis thaliana (Mouse-ear cress).